Reading from the N-terminus, the 294-residue chain is Nucleotide-binding protein Daud_0300 (294 aa).

11-18 (GLSGAGKT) serves as a coordination point for ATP. A GTP-binding site is contributed by 62-65 (DIRG).

It belongs to the RapZ-like family.

Functionally, displays ATPase and GTPase activities. The protein is Nucleotide-binding protein Daud_0300 of Desulforudis audaxviator (strain MP104C).